A 920-amino-acid chain; its full sequence is B3 domain-containing protein REM17 (920 aa).

3 consecutive DNA-binding regions (TF-B3) follow at residues 12–105 (NPHF…LGPS), 153–250 (RFVA…CRAK), and 267–361 (CFEG…LCPT). 3 disordered regions span residues 405-438 (DDDQ…SSFV), 540-562 (LACS…KNTS), and 585-614 (DDDQ…SSDH). Basic and acidic residues predominate over residues 423–432 (NPREKVESSS). The segment at residues 436 to 531 (SFVGSVNPSS…NKPVLSLCPT (96 aa)) is a DNA-binding region (TF-B3 4). 2 DNA-binding regions (TF-B3) span residues 616–714 (SFVA…SLSE) and 727–823 (YFVG…LCPA). Low complexity predominate over residues 842–852 (NSLSSNPSSGD). Residues 842–870 (NSLSSNPSSGDDSSRSEESEEENMEDKNI) form a disordered region.

Its subcellular location is the nucleus. This chain is B3 domain-containing protein REM17 (REM17), found in Arabidopsis thaliana (Mouse-ear cress).